The following is a 159-amino-acid chain: Large ribosomal subunit protein uL10 (159 aa).

Belongs to the universal ribosomal protein uL10 family. Part of the ribosomal stalk of the 50S ribosomal subunit. The N-terminus interacts with L11 and the large rRNA to form the base of the stalk. The C-terminus forms an elongated spine to which L12 dimers bind in a sequential fashion forming a multimeric L10(L12)X complex.

In terms of biological role, forms part of the ribosomal stalk, playing a central role in the interaction of the ribosome with GTP-bound translation factors. This Campylobacter jejuni subsp. jejuni serotype O:2 (strain ATCC 700819 / NCTC 11168) protein is Large ribosomal subunit protein uL10 (rplJ).